The sequence spans 48 residues: Delta-actitoxin-Bcg1c (48 aa).

Cystine bridges form between C4-C45, C6-C35, and C28-C46.

Its subcellular location is the secreted. The protein resides in the nematocyst. In terms of biological role, binds specifically to voltage-gated sodium channels SCN1A/Nav1.1, thereby delaying their inactivation during signal transduction. The protein is Delta-actitoxin-Bcg1c of Bunodosoma cangicum (Sea anemone).